The primary structure comprises 236 residues: Sensory rhodopsin II (236 aa).

7 consecutive transmembrane segments (helical) span residues 4-24 (ITTW…VLAY), 38-58 (LLLI…ALGF), 73-93 (YVDW…LAGA), 101-121 (LVVL…TPSP), 122-142 (VSYA…YLLY), 167-187 (FVVV…AGVG), and 196-216 (LVVV…ALLA). Lys206 bears the N6-(retinylidene)lysine mark.

Belongs to the archaeal/bacterial/fungal opsin family. In terms of processing, the covalent binding of retinal to the apoprotein, bacterioopsin, generates bacteriorhodopsin.

Its subcellular location is the membrane. Functionally, mediates the photorepellent response. This chain is Sensory rhodopsin II (sop2), found in Haloarcula marismortui (strain ATCC 43049 / DSM 3752 / JCM 8966 / VKM B-1809) (Halobacterium marismortui).